Consider the following 280-residue polypeptide: MSSSIKKLKKDTKDTDKTPSKKIYQETHNSEDSEDSEDSDNENNTITMFNSTQNFYKYINLNKIKSSNYHSEISDNSIRPYFENLEKHLVEYINKATYVIGCIAWLTNDNIISSLQQKKGIKIIVNKEEFLNPNMEIAKKNYYCTLRSKYQSLPNMFTSKCYCCSDSITSCKKFNKIFGSISMSENNNSSVLTCGIVNSLPKMHHKFLIFFDENLNPVGVWTGSYNLSKTSNFSLENALYITSQIVIAEYIKEFLAVYKHSENFNWKSGTLYGKLKNPVY.

The span at 1-10 (MSSSIKKLKK) shows a compositional bias: basic residues. A disordered region spans residues 1–45 (MSSSIKKLKKDTKDTDKTPSKKIYQETHNSEDSEDSEDSDNENNT). The span at 11–31 (DTKDTDKTPSKKIYQETHNSE) shows a compositional bias: basic and acidic residues. Residues 32 to 41 (DSEDSEDSDN) show a composition bias toward acidic residues.

This is an uncharacterized protein from Acanthamoeba polyphaga mimivirus (APMV).